Reading from the N-terminus, the 264-residue chain is Small ribosomal subunit protein uS3 (264 aa).

A KH type-2 domain is found at 39–107 (VRDFLKKKLK…PVHVNIEEIR (69 aa)). Positions 211 to 264 (NDAPVVEEPQDDRRRRPGRPEGRRREGEGRPGGNRRGGAGAGRRAAPGDAKSGE) are disordered. Basic and acidic residues predominate over residues 221–239 (DDRRRRPGRPEGRRREGEG). Gly residues predominate over residues 240-251 (RPGGNRRGGAGA).

It belongs to the universal ribosomal protein uS3 family. As to quaternary structure, part of the 30S ribosomal subunit. Forms a tight complex with proteins S10 and S14.

In terms of biological role, binds the lower part of the 30S subunit head. Binds mRNA in the 70S ribosome, positioning it for translation. The chain is Small ribosomal subunit protein uS3 from Cupriavidus pinatubonensis (strain JMP 134 / LMG 1197) (Cupriavidus necator (strain JMP 134)).